We begin with the raw amino-acid sequence, 346 residues long: Endo-1,4-beta-xylanase B (346 aa).

The signal sequence occupies residues 1–19; sequence MKGLPALLLLLIGCVSSFG. The 298-residue stretch at 41–338 folds into the GH10 domain; that stretch reads GNNFWSLPDA…KPCYFAIREL (298 aa). The Proton donor role is filled by glutamate 153. Glutamate 259 functions as the Nucleophile in the catalytic mechanism.

This sequence belongs to the glycosyl hydrolase 10 (cellulase F) family.

The enzyme catalyses Endohydrolysis of (1-&gt;4)-beta-D-xylosidic linkages in xylans.. This chain is Endo-1,4-beta-xylanase B (xynB), found in Thermotoga neapolitana.